The following is a 228-amino-acid chain: UPF0758 protein SAB1521c (228 aa).

The MPN domain occupies 102 to 224; the sequence is KITQPSDVAD…FTSLVEAGYF (123 aa). The Zn(2+) site is built by His173, His175, and Asp186. Positions 173–186 match the JAMM motif motif; it reads HNHPSGDVTPSQED.

Belongs to the UPF0758 family.

This is UPF0758 protein SAB1521c from Staphylococcus aureus (strain bovine RF122 / ET3-1).